Here is a 305-residue protein sequence, read N- to C-terminus: tRNA pseudouridine synthase B (305 aa).

The active-site Nucleophile is the Asp39.

Belongs to the pseudouridine synthase TruB family. Type 1 subfamily.

It carries out the reaction uridine(55) in tRNA = pseudouridine(55) in tRNA. Responsible for synthesis of pseudouridine from uracil-55 in the psi GC loop of transfer RNAs. This Staphylococcus aureus (strain Newman) protein is tRNA pseudouridine synthase B.